The sequence spans 220 residues: 1-Cys peroxiredoxin B (220 aa).

The 162-residue stretch at 4-165 (LTLGDVVPDL…VLRATDALLT (162 aa)) folds into the Thioredoxin domain. The active-site Cysteine sulfenic acid (-SOH) intermediate is cysteine 46. The Bipartite nuclear localization signal motif lies at 195–218 (KARFPAGFETAQLPSNKCYLRFTQ).

This sequence belongs to the peroxiredoxin family. Prx6 subfamily.

The protein localises to the nucleus. It localises to the cytoplasm. It catalyses the reaction a hydroperoxide + [thioredoxin]-dithiol = an alcohol + [thioredoxin]-disulfide + H2O. Functionally, thiol-specific peroxidase that catalyzes the reduction of hydrogen peroxide and organic hydroperoxides to water and alcohols, respectively. Seems to contribute to the inhibition of germination during stress. This Oryza sativa subsp. japonica (Rice) protein is 1-Cys peroxiredoxin B.